Here is a 530-residue protein sequence, read N- to C-terminus: Na(+)/H(+) antiporter NhaB (530 aa).

11 helical membrane-spanning segments follow: residues 23-43 (VAIIAFLIINPIVFFFINPFL), 45-65 (GWLLVVEFIFTLAMALKCYPL), 90-110 (LVANIEVLLLLVFMVAGIYFM), 113-133 (LLLFIFTKILLGIRSKVLLSI), 140-160 (AFLSAFLDALTVIAVIISVAV), 205-225 (LLMHAGVGTALGGVTTMVGEP), 238-258 (FGEFLLRMAPVTVPVFIAGML), 308-328 (IAVWLIVGLALHLAAVGLIGL), 351-371 (EEALPFTALLAVFFSIVAVII), 451-471 (ATPNGQAAFLFLLTSALAPLI), and 479-499 (VIMAFPYTLALSLVGFIGIMF).

The protein belongs to the NhaB Na(+)/H(+) (TC 2.A.34) antiporter family.

It localises to the cell inner membrane. It catalyses the reaction 2 Na(+)(in) + 3 H(+)(out) = 2 Na(+)(out) + 3 H(+)(in). In terms of biological role, na(+)/H(+) antiporter that extrudes sodium in exchange for external protons. The chain is Na(+)/H(+) antiporter NhaB from Vibrio cholerae serotype O1 (strain ATCC 39541 / Classical Ogawa 395 / O395).